Here is a 397-residue protein sequence, read N- to C-terminus: Iron-sulfur cluster assembly SufBD family protein Rv1462 (397 aa).

Residue threonine 2 is modified to N-acetylthreonine.

Belongs to the iron-sulfur cluster assembly SufBD family.

The protein is Iron-sulfur cluster assembly SufBD family protein Rv1462 of Mycobacterium tuberculosis (strain ATCC 25618 / H37Rv).